We begin with the raw amino-acid sequence, 160 residues long: MNLKILGIDPGSRNCGYAIMEANKGKNILIEAGLIKIKPSTLQYQITELCEGLDLIFKNHSFDEVAIEDIFFAYNPKTVLKLAQFRGALSLKILQIHGDFAEYTPLQVKKAVTGKAKATKEQVAFMVKRLLGLSKDIKPLDITDAIAVALTHAANLRVRV.

Catalysis depends on residues aspartate 9, glutamate 68, and aspartate 141. Residues aspartate 9, glutamate 68, and aspartate 141 each contribute to the Mg(2+) site.

It belongs to the RuvC family. Homodimer which binds Holliday junction (HJ) DNA. The HJ becomes 2-fold symmetrical on binding to RuvC with unstacked arms; it has a different conformation from HJ DNA in complex with RuvA. In the full resolvosome a probable DNA-RuvA(4)-RuvB(12)-RuvC(2) complex forms which resolves the HJ. Mg(2+) is required as a cofactor.

The protein resides in the cytoplasm. The enzyme catalyses Endonucleolytic cleavage at a junction such as a reciprocal single-stranded crossover between two homologous DNA duplexes (Holliday junction).. In terms of biological role, the RuvA-RuvB-RuvC complex processes Holliday junction (HJ) DNA during genetic recombination and DNA repair. Endonuclease that resolves HJ intermediates. Cleaves cruciform DNA by making single-stranded nicks across the HJ at symmetrical positions within the homologous arms, yielding a 5'-phosphate and a 3'-hydroxyl group; requires a central core of homology in the junction. The consensus cleavage sequence is 5'-(A/T)TT(C/G)-3'. Cleavage occurs on the 3'-side of the TT dinucleotide at the point of strand exchange. HJ branch migration catalyzed by RuvA-RuvB allows RuvC to scan DNA until it finds its consensus sequence, where it cleaves and resolves the cruciform DNA. The polypeptide is Crossover junction endodeoxyribonuclease RuvC (Campylobacter jejuni subsp. jejuni serotype O:23/36 (strain 81-176)).